Here is a 137-residue protein sequence, read N- to C-terminus: MTSRRDWQLQQLGITQWSLRRPGALQGEIAIAIPAHVRLVMVANDLPALTDPLVSDVLRALTVSPDQVLQLTPEKIAMLPQGSHCNSWRLGTDEPLSLEGAQVASPALTDLRANPTARAALWQQICTYEHDFFPRND.

The protein belongs to the DNA polymerase III psi/HolD chain family. The DNA polymerase III holoenzyme complex contains at least 10 different subunits organized into 3 functionally essential subassemblies: the Pol III core, the beta sliding clamp processivity factor and the clamp-loading complex. The Pol III core (subunits alpha, epsilon and theta) contains the polymerase and the 3'-5' exonuclease proofreading activities. The polymerase is tethered to the template via the dimeric beta sliding clamp processivity factor. The clamp-loading complex (also called gamma complex) assembles the beta sliding clamp onto the primed template and plays a central role in the organization and communication at the replication fork. The clamp-loading complex contains delta, delta', psi and chi, and 3 copies of either or both of two different DnaX proteins, gamma and tau. The DNA replisome complex has a single clamp loader (3 tau and 1 each of delta, delta', psi and chi subunits) which binds 3 Pol III cores (1 core on the leading strand and 2 on the lagging strand) each with a beta sliding clamp dimer. Additional proteins in the replisome are other copies of gamma, psi (this protein) and chi (holC), SSB, DNA helicase and RNA primase. The clamp loader hydrolyzes ATP to assemble the beta processivity factor onto the primed template and plays a central role in the organization and communication at the replication fork. Interacts directly with the chi subunit (holC).

The catalysed reaction is DNA(n) + a 2'-deoxyribonucleoside 5'-triphosphate = DNA(n+1) + diphosphate. Functionally, part of the beta sliding clamp loading complex, which hydrolyzes ATP to load the beta clamp onto primed DNA to form the DNA replication pre-initiation complex. DNA polymerase III is a complex, multichain enzyme responsible for most of the replicative synthesis in bacteria. This DNA polymerase also exhibits 3' to 5' exonuclease activity. In Escherichia coli (strain K12), this protein is DNA polymerase III subunit psi.